The primary structure comprises 178 residues: CDP-archaeol synthase (178 aa).

The next 4 membrane-spanning stretches (helical) occupy residues 3–23 (LLLL…ANAV), 56–76 (FFGI…VILY), 91–111 (IILS…GSFI), and 136–156 (LLFA…LLVI).

The protein belongs to the CDP-archaeol synthase family. Mg(2+) is required as a cofactor.

The protein localises to the cell membrane. It catalyses the reaction 2,3-bis-O-(geranylgeranyl)-sn-glycerol 1-phosphate + CTP + H(+) = CDP-2,3-bis-O-(geranylgeranyl)-sn-glycerol + diphosphate. It functions in the pathway membrane lipid metabolism; glycerophospholipid metabolism. Functionally, catalyzes the formation of CDP-2,3-bis-(O-geranylgeranyl)-sn-glycerol (CDP-archaeol) from 2,3-bis-(O-geranylgeranyl)-sn-glycerol 1-phosphate (DGGGP) and CTP. This reaction is the third ether-bond-formation step in the biosynthesis of archaeal membrane lipids. The polypeptide is CDP-archaeol synthase (Methanococcus maripaludis (strain C5 / ATCC BAA-1333)).